The primary structure comprises 49 residues: SPbeta prophage-derived uncharacterized protein YoqT (49 aa).

Residues 7 to 29 (CFVNWSFDKIMDYILIAGLYFVF) form a helical membrane-spanning segment.

The protein localises to the cell membrane. This chain is SPbeta prophage-derived uncharacterized protein YoqT (yoqT), found in Bacillus subtilis (strain 168).